Here is a 295-residue protein sequence, read N- to C-terminus: uncharacterized protein (295 aa).

One can recognise an HTH lysR-type domain in the interval 1 to 58 (MESGDLRVFQMVAREGTITKAALQLGYVQSNVTARIQQLEAELGTTLFLRHNRGMTLS). The H-T-H motif DNA-binding region spans 18–37 (ITKAALQLGYVQSNVTARIQ).

The protein belongs to the LysR transcriptional regulatory family.

This is an uncharacterized protein from Bacillus subtilis (strain 168).